The following is a 1318-amino-acid chain: 1-phosphatidylinositol 4,5-bisphosphate phosphodiesterase classes I and II (1318 aa).

Positions 318–466 (DDMDQPMSHY…LRRKIIIKNK (149 aa)) constitute a PI-PLC X-box domain. Catalysis depends on residues His-333 and His-378. Positions 464 and 466 each coordinate substrate. A compositionally biased stretch (basic residues) spans 466–481 (KKKHHHHHHHHHHKKP). Disordered stretches follow at residues 466–489 (KKKH…TPAA) and 505–594 (QQVG…KETE). Composition is skewed to low complexity over residues 528–543 (ATGT…AGHA) and 554–563 (KDSTGSSDSD). A compositionally biased stretch (polar residues) spans 571-580 (LPNTTPNLPS). The segment covering 585–594 (PPEKAQKETE) has biased composition (basic and acidic residues). Residues 599-715 (ISALVNYVQP…GYLLKPEFMR (117 aa)) enclose the PI-PLC Y-box domain. Residues Ser-628 and Arg-655 each coordinate substrate. Residues 715 to 843 (RRSDRRLDPF…NLRSEVGQPI (129 aa)) form the C2 domain. Disordered stretches follow at residues 1080-1112 (LDLG…TQES) and 1296-1318 (GSHS…EMKT). Over residues 1088–1107 (ESAAADAGEDLAGGSSSLDG) the composition is skewed to low complexity.

Expressed in neuronal cell bodies of the optic lobe, central brain, and thoracic ganglia in adults, and the brain of larvae.

It carries out the reaction a 1,2-diacyl-sn-glycero-3-phospho-(1D-myo-inositol-4,5-bisphosphate) + H2O = 1D-myo-inositol 1,4,5-trisphosphate + a 1,2-diacyl-sn-glycerol + H(+). Functionally, the production of the second messenger molecules diacylglycerol (DAG) and inositol 1,4,5-trisphosphate (IP3) is mediated by activated phosphatidylinositol-specific phospholipase C enzymes. This is 1-phosphatidylinositol 4,5-bisphosphate phosphodiesterase classes I and II (Plc21C) from Drosophila melanogaster (Fruit fly).